The primary structure comprises 265 residues: Cytochrome c oxidase subunit 3 (265 aa).

The next 6 membrane-spanning stretches (helical) occupy residues 41–61, 85–105, 137–157, 162–182, 200–220, and 245–265; these read GGATLLSLGLIFILYTMFVWW, GFILFIVSEVMFFFAFFWAFF, TLILLSSGAAVTWAHHAILAG, AVYALVATVLLALVFTGFQGM, FFLATGFHGFHVIIGTLFLIV, and WHFVDVVWLFLFVSIYWWGGI.

Belongs to the cytochrome c oxidase subunit 3 family. Component of the cytochrome c oxidase (complex IV, CIV), a multisubunit enzyme composed of a catalytic core of 3 subunits and several supernumerary subunits. The complex exists as a monomer or a dimer and forms supercomplexes (SCs) in the inner mitochondrial membrane with ubiquinol-cytochrome c oxidoreductase (cytochrome b-c1 complex, complex III, CIII).

The protein resides in the mitochondrion inner membrane. The enzyme catalyses 4 Fe(II)-[cytochrome c] + O2 + 8 H(+)(in) = 4 Fe(III)-[cytochrome c] + 2 H2O + 4 H(+)(out). Component of the cytochrome c oxidase, the last enzyme in the mitochondrial electron transport chain which drives oxidative phosphorylation. The respiratory chain contains 3 multisubunit complexes succinate dehydrogenase (complex II, CII), ubiquinol-cytochrome c oxidoreductase (cytochrome b-c1 complex, complex III, CIII) and cytochrome c oxidase (complex IV, CIV), that cooperate to transfer electrons derived from NADH and succinate to molecular oxygen, creating an electrochemical gradient over the inner membrane that drives transmembrane transport and the ATP synthase. Cytochrome c oxidase is the component of the respiratory chain that catalyzes the reduction of oxygen to water. Electrons originating from reduced cytochrome c in the intermembrane space (IMS) are transferred via the dinuclear copper A center (CU(A)) of subunit 2 and heme A of subunit 1 to the active site in subunit 1, a binuclear center (BNC) formed by heme A3 and copper B (CU(B)). The BNC reduces molecular oxygen to 2 water molecules using 4 electrons from cytochrome c in the IMS and 4 protons from the mitochondrial matrix. This Triticum aestivum (Wheat) protein is Cytochrome c oxidase subunit 3 (COX3).